The following is a 383-amino-acid chain: Trihelix transcription factor ASIL1 (383 aa).

Disordered stretches follow at residues 1 to 32 (MEDD…LPTN), 61 to 94 (HTPS…DDCW), 189 to 295 (IASS…SGVG), and 346 to 383 (EITQ…NVSS). Residues 66-88 (TGGGGSGNRNGRGGGGGSGGGGG) are compositionally biased toward gly residues. The region spanning 94–153 (WSEEATKVLIEAWGDRFSEPGKGTLKQQHWKEVAEIVNKSRQCKYPKTDIQCKNRIDTVK) is the Myb-like domain. Residues 206–225 (NSRSSMFKRQTKGNQIVQQQ) show a composition bias toward polar residues. A compositionally biased stretch (basic and acidic residues) spans 226 to 235 (QEKRGSDSMR). The Bipartite nuclear localization signal signature appears at 228–241 (KRGSDSMRWHFRKR). Acidic residues predominate over residues 246–262 (TESESDPEPEASPEESA). The segment covering 263–274 (ESLPPLQPIQPL) has biased composition (low complexity). Positions 304 to 365 (FTEAYEKAET…ERSRQRGERR (62 aa)) form a coiled coil. The segment covering 356-367 (ERSRQRGERRIV) has biased composition (basic and acidic residues).

It localises to the nucleus. In terms of biological role, transcription repressor that binds specific DNA sequence such as the GT-box-like motif 5'-CGTGATT-3' in the AT2S3 promoter. Negative regulator of seed maturation genes during seed germination and seedling development. May target GT-box-containing embryonic genes by competing with the binding of transcriptional activators to this promoter region. Contributes to the maintenance and control of seed filling and may repress the maturation program during early embryogenesis. This is Trihelix transcription factor ASIL1 from Arabidopsis thaliana (Mouse-ear cress).